Consider the following 20-residue polypeptide: Insulin-like growth factor-binding protein 2 (20 aa).

The 19-residue stretch at 2–20 (LVFYCPKCTAERQTACPKL) folds into the IGFBP N-terminal domain.

In terms of assembly, binds IGF2 more than IGF1. In terms of processing, N-glycosylated.

It localises to the secreted. In terms of biological role, inhibits IGF-mediated growth and developmental rates. IGF-binding proteins prolong the half-life of the IGFs and have been shown to either inhibit or stimulate the growth promoting effects of the IGFs on cell culture. They alter the interaction of IGFs with their cell surface receptors. The chain is Insulin-like growth factor-binding protein 2 (igfbp2) from Oncorhynchus tshawytscha (Chinook salmon).